A 205-amino-acid chain; its full sequence is uncharacterized protein (205 aa).

A disordered region spans residues 72–114 (ARVSPYGYESDSENEEYTRISSATSSNVLTDSPTTTQDDPTGR). A compositionally biased stretch (polar residues) spans 90 to 100 (RISSATSSNVL). Low complexity predominate over residues 101-110 (TDSPTTTQDD).

This is an uncharacterized protein from Equus caballus (Horse).